Consider the following 95-residue polypeptide: Co-chaperonin GroES (95 aa).

It belongs to the GroES chaperonin family. In terms of assembly, heptamer of 7 subunits arranged in a ring. Interacts with the chaperonin GroEL.

Its subcellular location is the cytoplasm. Functionally, together with the chaperonin GroEL, plays an essential role in assisting protein folding. The GroEL-GroES system forms a nano-cage that allows encapsulation of the non-native substrate proteins and provides a physical environment optimized to promote and accelerate protein folding. GroES binds to the apical surface of the GroEL ring, thereby capping the opening of the GroEL channel. The protein is Co-chaperonin GroES of Novosphingobium aromaticivorans (strain ATCC 700278 / DSM 12444 / CCUG 56034 / CIP 105152 / NBRC 16084 / F199).